A 1559-amino-acid polypeptide reads, in one-letter code: Arginine-glutamic acid dipeptide repeats protein (1559 aa).

Positions 1–36 (MTADKDKDKDKEKDRDRDRDRERDKRDKARESENAR) are enriched in basic and acidic residues. Residues 1 to 89 (MTADKDKDKD…KKKSRYERTD (89 aa)) are disordered. Phosphoserine is present on residues S53 and S56. Basic residues predominate over residues 73-84 (KSRKKPPKKKSR). The 181-residue stretch at 102–282 (VVYRPGDCVY…PETRRLNSTQ (181 aa)) folds into the BAH domain. T119 is modified (phosphothreonine). Phosphoserine occurs at positions 141 and 303. An ELM2 domain is found at 283-386 (GEIRVGPSHQ…KALQRLVKKP (104 aa)). One can recognise an SANT domain in the interval 390 to 442 (LIEKCWTEDEVKRFVKGLRQYGKNFFRIRKELLPNKETGELITFYYYWKKTPE). A disordered region spans residues 463 to 494 (TRTASTPVNTPSRPPSSEFLDLSSASEDDFDS). The span at 464–473 (RTASTPVNTP) shows a compositional bias: polar residues. Residues 478-487 (SSEFLDLSSA) are compositionally biased toward low complexity. The segment at 507-532 (RHCFTTTSKDWHHGGRENILLCTDCR) adopts a GATA-type zinc-finger fold. Residues 541-1125 (LPPIEKPVDP…PSHASQSARF (585 aa)) are disordered. K559 is covalently cross-linked (Glycyl lysine isopeptide (Lys-Gly) (interchain with G-Cter in SUMO2)). S593, S599, and S612 each carry phosphoserine. Residues 608 to 622 (SGRNSPSAASTSSND) are compositionally biased toward low complexity. Over residues 623-639 (SKAEAVKKSAKKVKEEA) the composition is skewed to basic and acidic residues. A Glycyl lysine isopeptide (Lys-Gly) (interchain with G-Cter in SUMO2) cross-link involves residue K636. Residues S641, S655, S674, and S678 each carry the phosphoserine modification. Positions 651 to 672 (EKVASDTEDTDRATSKKTKTQE) are enriched in basic and acidic residues. Residues 687 to 707 (SDSRSVNDEGSSDPKDIDQDN) show a composition bias toward basic and acidic residues. Polar residues predominate over residues 708–735 (RSTSPSIPSPQDNESDSDSSAQQQMLQT). Residues 736-761 (QPPALQAPSGAASAPSTAPPGTTQLP) show a composition bias toward low complexity. Residues 768–791 (SATTVPPQGSPATSQPPNQTQSTV) are compositionally biased toward polar residues. Over residues 805-822 (LHPPRLPSPHPPLQPMTA) the composition is skewed to pro residues. Residues 890–900 (QLPASQSALQP) are compositionally biased toward low complexity. Positions 901–931 (QQPPREQPLPPAPLAMPHIKPPPTTPIPQLP) are enriched in pro residues. The span at 961 to 971 (KPLSSLSTHHP) shows a compositional bias: low complexity. The span at 1027-1053 (PQHPFVPGGPPPITPPSCPPTSTPPAG) shows a compositional bias: pro residues. Residues 1054–1068 (PSSSSQPPCSAAVSS) are compositionally biased toward low complexity. Residues S1098, S1105, and S1107 each carry the phosphoserine modification. Positions 1098-1109 (SPPPPPRSPSPE) are enriched in pro residues. A Phosphothreonine modification is found at T1111. The stretch at 1148–1205 (GSKLAKKREEAIEKAKREAEQKAREEREREKEKEKEREREREREREAERAAQKASSSA) forms a coiled coil. K1150 carries the N6-acetyllysine modification. The segment covering 1154–1198 (KREEAIEKAKREAEQKAREEREREKEKEKEREREREREREAERAA) has biased composition (basic and acidic residues). The tract at residues 1154-1239 (KREEAIEKAK…TTIAAVPPYI (86 aa)) is disordered. Residue Y1252 is modified to Phosphotyrosine. The residue at position 1259 (S1259) is a Phosphoserine.

In terms of assembly, interacts with HDAC1 and ATN1. Interaction with ATN1 is improved when the poly-Gln region of ATN1 is extended. Widely expressed.

It is found in the nucleus. Its subcellular location is the PML body. Its function is as follows. Plays a role as a transcriptional repressor during development. May play a role in the control of cell survival. Interacts with FAT1. The chain is Arginine-glutamic acid dipeptide repeats protein (Rere) from Rattus norvegicus (Rat).